The chain runs to 384 residues: Gibberellin 3-beta-dioxygenase 1 (384 aa).

The region spanning 225-327 (TLTSTIHLNM…RISMPYFLGP (103 aa)) is the Fe2OG dioxygenase domain. Residues H250, D252, and H308 each contribute to the Fe cation site. 2-oxoglutarate is bound by residues R318 and S320.

The protein belongs to the iron/ascorbate-dependent oxidoreductase family. It depends on L-ascorbate as a cofactor. Requires Fe(2+) as cofactor. Expressed in unopened flowers.

The catalysed reaction is gibberellin A20 + 2-oxoglutarate + O2 = gibberellin A1 + succinate + CO2. The protein operates within plant hormone biosynthesis; gibberellin biosynthesis. Functionally, catalyzes the 3-beta-hydroxylation of the inactive gibberellin precursors, leading to the formation of bioactive gibberellins. In vitro, converts the precursors GA20, GA5, GA44 and GA9 to the corresponding 3-beta-hydroxylated bioactive products GA1, GA3, GA38 and GA4, respectively. Involved in the production of bioactive GA for vegetative growth and development. May possess 2,3-desaturase activity, catalyzing the conversion of GA9 to 2,3-dehydro-GA9, and GA20 to GA5 (2,3-dehydro GA20). May possess 2-beta-hydroxylase activity, catalyzing the conversion of GA1 and GA4 to the corresponding 2-beta-hydroxylated products GA8 and GA34, respectively. The polypeptide is Gibberellin 3-beta-dioxygenase 1 (Oryza sativa subsp. japonica (Rice)).